Reading from the N-terminus, the 426-residue chain is Serine--tRNA ligase (426 aa).

233–235 (TAE) provides a ligand contact to L-serine. 264–266 (RRE) is an ATP binding site. Position 287 (E287) interacts with L-serine. 351–354 (EISS) is an ATP binding site. An L-serine-binding site is contributed by S386.

It belongs to the class-II aminoacyl-tRNA synthetase family. Type-1 seryl-tRNA synthetase subfamily. As to quaternary structure, homodimer. The tRNA molecule binds across the dimer.

The protein resides in the cytoplasm. It catalyses the reaction tRNA(Ser) + L-serine + ATP = L-seryl-tRNA(Ser) + AMP + diphosphate + H(+). The catalysed reaction is tRNA(Sec) + L-serine + ATP = L-seryl-tRNA(Sec) + AMP + diphosphate + H(+). It participates in aminoacyl-tRNA biosynthesis; selenocysteinyl-tRNA(Sec) biosynthesis; L-seryl-tRNA(Sec) from L-serine and tRNA(Sec): step 1/1. Its function is as follows. Catalyzes the attachment of serine to tRNA(Ser). Is also able to aminoacylate tRNA(Sec) with serine, to form the misacylated tRNA L-seryl-tRNA(Sec), which will be further converted into selenocysteinyl-tRNA(Sec). The sequence is that of Serine--tRNA ligase from Prochlorococcus marinus (strain NATL2A).